Here is a 592-residue protein sequence, read N- to C-terminus: Ferric-chelate reductase 1 (592 aa).

The chain crosses the membrane as a helical span at residues 2–22 (AAPQITLSVLVIALLTCSVTA). Residues 13 to 179 (IALLTCSVTA…FTTPKATTQP (167 aa)) enclose the Reelin domain. Residues asparagine 85, asparagine 308, asparagine 321, and asparagine 353 are each glycosylated (N-linked (GlcNAc...) asparagine). The region spanning 216 to 331 (EPACVFLSFT…ESYYIFFAEG (116 aa)) is the DOMON domain. The Cytochrome b561 domain maps to 335-534 (DGRIFRHSQQ…IGTEVILEIH (200 aa)). Residues 372-392 (AHGALMFVAWMTTVSIGVLVA) form a helical membrane-spanning segment. 2 residues coordinate heme b: histidine 373 and histidine 414. A run of 5 helical transmembrane segments spans residues 415-435 (RMLM…PFVY), 446-466 (HPYL…LATF), 477-499 (VFNW…AMFL), 515-535 (YAMM…EIHA), and 569-589 (VVLA…LSAI). Residues histidine 446 and histidine 482 each coordinate heme b.

It belongs to the FRRS1 family. Heme b is required as a cofactor. In terms of tissue distribution, expressed in spleen, liver and kidney with low expression in brain. Localizes in adult brain to the choroid plexus of the fourth, third, and lateral ventricles and to ependymal cells that line the ventricles.

It localises to the membrane. Ferric-chelate reductases reduce Fe(3+) to Fe(2+) before its transport from the endosome to the cytoplasm. The chain is Ferric-chelate reductase 1 (FRRS1) from Mus musculus (Mouse).